The sequence spans 301 residues: Probable 2-(5''-triphosphoribosyl)-3'-dephosphocoenzyme-A synthase (301 aa).

It belongs to the CitG/MdcB family.

The enzyme catalyses 3'-dephospho-CoA + ATP = 2'-(5''-triphospho-alpha-D-ribosyl)-3'-dephospho-CoA + adenine. The protein is Probable 2-(5''-triphosphoribosyl)-3'-dephosphocoenzyme-A synthase of Pectobacterium carotovorum subsp. carotovorum (strain PC1).